A 266-amino-acid polypeptide reads, in one-letter code: Mitochondrial S-adenosylmethionine carrier protein (266 aa).

3 Solcar repeats span residues 4–77, 85–167, and 176–264; these read RELC…AKRF, LSPI…LKNL, and VDCW…VRSS. Transmembrane regions (helical) follow at residues 5-25, 49-69, 84-104, 141-161, 181-201, and 237-257; these read ELCASLLAGGAAGMSVDLILF, IYAGVPSTAVGSFPNAAAFFV, YLSPIIHMAAAFLGELVACLI, RGYKSTVLREIPFSLVQFPLW, SAVCGAFAGGFAAAVTTPLDV, and FAGVIPRMTMISLGGFIFLGA.

The protein belongs to the mitochondrial carrier (TC 2.A.29) family.

The protein resides in the mitochondrion inner membrane. It carries out the reaction S-adenosyl-L-homocysteine(out) + S-adenosyl-L-methionine(in) = S-adenosyl-L-homocysteine(in) + S-adenosyl-L-methionine(out). Its function is as follows. Mitochondrial S-adenosyl-L-methionine/S-adenosyl-L-homocysteine antiporter. Mediates the exchange of cytosolic S-adenosyl-L-methionine, the predominant methyl-group donor for macromolecule methylation processes, for mitochondrial S-adenosylhomocysteine(SAH), a by-product of methylation reactions. The sequence is that of Mitochondrial S-adenosylmethionine carrier protein (slc25a26) from Xenopus laevis (African clawed frog).